The primary structure comprises 266 residues: Small ribosomal subunit protein eS1 (266 aa).

A disordered region spans residues 233–266 (GEGGGSSAAKPSGDDTGAKVDRADGYEPPIQETV). A compositionally biased stretch (basic and acidic residues) spans 244 to 257 (SGDDTGAKVDRADG).

Belongs to the eukaryotic ribosomal protein eS1 family. In terms of assembly, component of the small ribosomal subunit. Mature ribosomes consist of a small (40S) and a large (60S) subunit. The 40S subunit contains about 33 different proteins and 1 molecule of RNA (18S). The 60S subunit contains about 49 different proteins and 3 molecules of RNA (28S, 5.8S and 5S). Part of the small subunit (SSU) processome, composed of more than 70 proteins and the RNA chaperone small nucleolar RNA (snoRNA) U3.

The protein localises to the cytoplasm. It localises to the nucleus. The protein resides in the nucleolus. In terms of biological role, component of the small ribosomal subunit. The ribosome is a large ribonucleoprotein complex responsible for the synthesis of proteins in the cell. Part of the small subunit (SSU) processome, first precursor of the small eukaryotic ribosomal subunit. During the assembly of the SSU processome in the nucleolus, many ribosome biogenesis factors, an RNA chaperone and ribosomal proteins associate with the nascent pre-rRNA and work in concert to generate RNA folding, modifications, rearrangements and cleavage as well as targeted degradation of pre-ribosomal RNA by the RNA exosome. May play a role during erythropoiesis. This chain is Small ribosomal subunit protein eS1 (rps3a), found in Salmo salar (Atlantic salmon).